A 71-amino-acid polypeptide reads, in one-letter code: R-phycoerythrin gamma-1 chain, chloroplastic (71 aa).

2 residues coordinate phycourobilin: Cys-25 and Cys-34. (2R,3E)-phycoerythrobilin is bound at residue Cys-49. Cys-58 contributes to the phycourobilin binding site.

As to quaternary structure, heteromer of 6 alpha, 6 beta and 1 gamma chains. Contains four covalently linked bilin chromophores.

It localises to the plastid. The protein resides in the chloroplast thylakoid membrane. Critical for the incorporation of phycoerythrin in the phycobilisome complex. The protein is R-phycoerythrin gamma-1 chain, chloroplastic of Gastroclonium coulteri (Red alga).